The sequence spans 519 residues: Putative cytochrome P450 CYP13A1 (519 aa).

Cys465 is a heme binding site.

The protein belongs to the cytochrome P450 family. Heme serves as cofactor.

Functionally, cytochromes P450 are a group of heme-thiolate monooxygenases. They oxidize a variety of structurally unrelated compounds, including steroids, fatty acids, and xenobiotics. The sequence is that of Putative cytochrome P450 CYP13A1 (cyp-13A1) from Caenorhabditis elegans.